The sequence spans 320 residues: L-lactate dehydrogenase (320 aa).

Residues valine 19, aspartate 40, arginine 45, and 85–86 contribute to the NAD(+) site; that span reads GA. Residues glutamine 88 and arginine 94 each coordinate substrate. Residues serine 107, 124 to 126, and serine 149 each bind NAD(+); that span reads ITN. Substrate is bound at residue 126–129; sequence NPVD. Residue 154 to 157 participates in substrate binding; it reads DSAR. Residues arginine 159 and histidine 174 each coordinate beta-D-fructose 1,6-bisphosphate. Histidine 181 (proton acceptor) is an active-site residue. Tyrosine 228 is modified (phosphotyrosine). Threonine 237 contributes to the substrate binding site.

Belongs to the LDH/MDH superfamily. LDH family. Homotetramer.

Its subcellular location is the cytoplasm. It carries out the reaction (S)-lactate + NAD(+) = pyruvate + NADH + H(+). Its pathway is fermentation; pyruvate fermentation to lactate; (S)-lactate from pyruvate: step 1/1. With respect to regulation, allosterically activated by fructose 1,6-bisphosphate (FBP). In terms of biological role, catalyzes the conversion of lactate to pyruvate. In Bifidobacterium animalis subsp. lactis (strain AD011), this protein is L-lactate dehydrogenase.